The following is a 100-amino-acid chain: Small ribosomal subunit protein uS14 (100 aa).

It belongs to the universal ribosomal protein uS14 family. In terms of assembly, part of the 30S ribosomal subunit. Contacts proteins S3 and S10.

Its function is as follows. Binds 16S rRNA, required for the assembly of 30S particles and may also be responsible for determining the conformation of the 16S rRNA at the A site. The sequence is that of Small ribosomal subunit protein uS14 from Synechocystis sp. (strain ATCC 27184 / PCC 6803 / Kazusa).